The following is a 728-amino-acid chain: Catalase-peroxidase 1 (728 aa).

The segment at residues 91 to 218 is a cross-link (tryptophyl-tyrosyl-methioninium (Trp-Tyr) (with M-244)); it reads WHSAGTYRTA…LAAVQMGLIY (128 aa). Catalysis depends on His92, which acts as the Proton acceptor. A cross-link (tryptophyl-tyrosyl-methioninium (Tyr-Met) (with W-91)) is located at residues 218-244; the sequence is YVNPEGPDGNPDPVAAAHDIRETFARM. His259 is a heme b binding site.

The protein belongs to the peroxidase family. Peroxidase/catalase subfamily. As to quaternary structure, homodimer or homotetramer. Heme b serves as cofactor. Post-translationally, formation of the three residue Trp-Tyr-Met cross-link is important for the catalase, but not the peroxidase activity of the enzyme.

It catalyses the reaction H2O2 + AH2 = A + 2 H2O. The enzyme catalyses 2 H2O2 = O2 + 2 H2O. Its function is as follows. Bifunctional enzyme with both catalase and broad-spectrum peroxidase activity. The protein is Catalase-peroxidase 1 of Burkholderia cenocepacia (strain ATCC BAA-245 / DSM 16553 / LMG 16656 / NCTC 13227 / J2315 / CF5610) (Burkholderia cepacia (strain J2315)).